Reading from the N-terminus, the 224-residue chain is Agamous-like MADS-box protein AGL9 homolog (224 aa).

The MADS-box domain occupies R3–F57. One can recognise a K-box domain in the interval E89 to L179.

Flower specific.

The protein localises to the nucleus. In terms of biological role, probable transcription factor active in inflorescence development and floral organogenesis. This is Agamous-like MADS-box protein AGL9 homolog (TDR5) from Solanum lycopersicum (Tomato).